A 131-amino-acid polypeptide reads, in one-letter code: Small ribosomal subunit protein uS8 (131 aa).

This sequence belongs to the universal ribosomal protein uS8 family. Part of the 30S ribosomal subunit. Contacts proteins S5 and S12.

Functionally, one of the primary rRNA binding proteins, it binds directly to 16S rRNA central domain where it helps coordinate assembly of the platform of the 30S subunit. The protein is Small ribosomal subunit protein uS8 of Vesicomyosocius okutanii subsp. Calyptogena okutanii (strain HA).